A 348-amino-acid polypeptide reads, in one-letter code: MIILGLETSCDETSGAVLVDGEVRSNVVSSQLCHKGFGGVVPELASREHERLIVPITEAALAEANITKKDIDVIAATAGPGLIGAVMVGLSFAQSMAWALGVPFVAVNHVEAHMFSPFIDQETAGGGPIGPFISLTVSGGHTLLAIVREDLTYRIIGRTLDDAAGEAFDKTGKMLGLPYPAGPAIDRLAKEGDAGFHRFPRALTSQSQTSRSYRDNFDFSFSGLKTSVLTWLRSQKEEFIHEHRADIAASIQDAIVGVLVEKAVGAARRHNIGAIAVAGGVSANSELRRAMDAACRKHGIALFIPSATYSTDNAAMIATLAGLKLSRGLQPLCRYDTAPFASFSAAGN.

The Fe cation site is built by His109 and His113. Substrate contacts are provided by residues 136–140 (TVSGG), Asp169, Gly182, Asp186, and Asn284. Asp312 is a binding site for Fe cation.

It belongs to the KAE1 / TsaD family. Requires Fe(2+) as cofactor.

Its subcellular location is the cytoplasm. The catalysed reaction is L-threonylcarbamoyladenylate + adenosine(37) in tRNA = N(6)-L-threonylcarbamoyladenosine(37) in tRNA + AMP + H(+). Required for the formation of a threonylcarbamoyl group on adenosine at position 37 (t(6)A37) in tRNAs that read codons beginning with adenine. Is involved in the transfer of the threonylcarbamoyl moiety of threonylcarbamoyl-AMP (TC-AMP) to the N6 group of A37, together with TsaE and TsaB. TsaD likely plays a direct catalytic role in this reaction. This is tRNA N6-adenosine threonylcarbamoyltransferase from Chlorobium luteolum (strain DSM 273 / BCRC 81028 / 2530) (Pelodictyon luteolum).